The following is a 319-amino-acid chain: Probable arabinan endo-1,5-alpha-L-arabinosidase C (319 aa).

The N-terminal stretch at 1-16 (MFVYTLIFLFLAAANA) is a signal peptide. D31 functions as the Proton acceptor in the catalytic mechanism. Residue N190 is glycosylated (N-linked (GlcNAc...) asparagine). The active-site Proton donor is the E198. N222 carries an N-linked (GlcNAc...) asparagine glycan.

The protein belongs to the glycosyl hydrolase 43 family.

Its subcellular location is the secreted. The catalysed reaction is Endohydrolysis of (1-&gt;5)-alpha-arabinofuranosidic linkages in (1-&gt;5)-arabinans.. The protein operates within glycan metabolism; L-arabinan degradation. Its function is as follows. Endo-1,5-alpha-L-arabinanase involved in degradation of pectin. Its preferred substrate is linear 1,5-alpha-L-arabinan. The chain is Probable arabinan endo-1,5-alpha-L-arabinosidase C (abnC) from Aspergillus clavatus (strain ATCC 1007 / CBS 513.65 / DSM 816 / NCTC 3887 / NRRL 1 / QM 1276 / 107).